Here is a 26-residue protein sequence, read N- to C-terminus: uncharacterized protein (26 aa).

Polar residues predominate over residues 1–16 (MPEQKANCSPNGNITV). The tract at residues 1 to 26 (MPEQKANCSPNGNITVDSMIMSLGSS) is disordered.

This is an uncharacterized protein from Saccharomyces cerevisiae (strain ATCC 204508 / S288c) (Baker's yeast).